Reading from the N-terminus, the 419-residue chain is Carboxypeptidase A1 (419 aa).

The first 16 residues, 1–16 (MWGLLIFSVLLGGVLA), serve as a signal peptide directing secretion. A propeptide spans 17-110 (KEDFVGHQVL…QEQMFASQGR (94 aa)) (activation peptide). The 294-residue stretch at 121 to 414 (TYHTLEEIYD…LALLTIMEHT (294 aa)) folds into the Peptidase M14 domain. His179 and Glu182 together coordinate Zn(2+). Substrate-binding positions include 179 to 182 (HSRE), Arg237, and 254 to 255 (NR). An intrachain disulfide couples Cys248 to Cys271. His306 contacts Zn(2+). Residues 307–308 (SY) and Tyr358 contribute to the substrate site. The Proton donor/acceptor role is filled by Glu380.

Belongs to the peptidase M14 family. As to quaternary structure, monomer. May form a complex with proelastase 2. It depends on Zn(2+) as a cofactor.

The protein resides in the secreted. The enzyme catalyses Release of a C-terminal amino acid, but little or no action with -Asp, -Glu, -Arg, -Lys or -Pro.. The catalysed reaction is leukotriene C4 + H2O = leukotriene F4 + glycine. Carboxypeptidase that catalyzes the release of a C-terminal amino acid, but has little or no action with -Asp, -Glu, -Arg, -Lys or -Pro. Catalyzes the conversion of leukotriene C4 to leukotriene F4 via the hydrolysis of an amide bond. The chain is Carboxypeptidase A1 (CPA1) from Sus scrofa (Pig).